The chain runs to 265 residues: 3-methyl-2-oxobutanoate hydroxymethyltransferase (265 aa).

The Mg(2+) site is built by Asp-45 and Asp-84. Residues 45–46, Asp-84, and Lys-112 each bind 3-methyl-2-oxobutanoate; that span reads DS. Glu-114 serves as a coordination point for Mg(2+). Catalysis depends on Glu-181, which acts as the Proton acceptor.

This sequence belongs to the PanB family. As to quaternary structure, homodecamer; pentamer of dimers. It depends on Mg(2+) as a cofactor.

It localises to the cytoplasm. It catalyses the reaction 3-methyl-2-oxobutanoate + (6R)-5,10-methylene-5,6,7,8-tetrahydrofolate + H2O = 2-dehydropantoate + (6S)-5,6,7,8-tetrahydrofolate. Its pathway is cofactor biosynthesis; (R)-pantothenate biosynthesis; (R)-pantoate from 3-methyl-2-oxobutanoate: step 1/2. Catalyzes the reversible reaction in which hydroxymethyl group from 5,10-methylenetetrahydrofolate is transferred onto alpha-ketoisovalerate to form ketopantoate. The sequence is that of 3-methyl-2-oxobutanoate hydroxymethyltransferase from Pectobacterium carotovorum subsp. carotovorum (strain PC1).